A 528-amino-acid chain; its full sequence is MARCRHHSGYVADDEASHSMCSARVQLPKKPLVPEMGPASKLGHVPHPPSTCGSSALQNQRRNKRHPQPFSHFLDFLTESHVLDSLETVVEKATERMAAMKTEAGVPLVEVQDPVEVPSGGRRAHARPSLSTVHRHRVRPTLCTGHPNNYPSSSSSMSDSHSSLMAGWLGSHSRDSDLGAQGLGSLPPVKDRLLLEKNLKRLLQLERKGKGLSQSCSKRDSLLWDLLGSQTSFQWTQEQPLSWFSELLGSSSGVPEASEPRPGEQEPICKREFNKEIKSLLSQLESLDLPGYCPLREPHRTLNFLADHRLFPALQSVVNQAVDKLRGARCRDGRPLFPTSLEPPSELQVQRNLPPLGSEPAKPTNSGQPHPTVSSPKTPQRKHKDRGGSPSMSSAQVATRFKLKVTPMEKPDIPSPSLHSREKEPDSDPKLQNPPVSLSSRQRAQPWRGLHLTLPAPGIVVEVACGQGHLRVVTPPLACPYPHSSCYLLPELSPVTSSSPSSLCPEVTSSKVGPDMSLQEKGSLTHHS.

Residues G43–Q68 are disordered. A compositionally biased stretch (polar residues) spans T51–Q60. Positions H81 to A104 form a coiled coil. Disordered stretches follow at residues P335–A444 and S497–S528. Residues P363 to T378 are compositionally biased toward polar residues. S389 is subject to Phosphoserine. Over residues H419–P429 the composition is skewed to basic and acidic residues. A compositionally biased stretch (polar residues) spans P434–R443. Residues S497–S510 are compositionally biased toward low complexity.

The protein localises to the cytoplasm. The protein resides in the cytoskeleton. It is found in the microtubule organizing center. It localises to the centrosome. This is Coiled-coil domain-containing protein 116 (CCDC116) from Macaca fascicularis (Crab-eating macaque).